The primary structure comprises 1275 residues: Inner capsid protein lambda-1 (1275 aa).

A compositionally biased stretch (basic residues) spans 1–12; that stretch reads MKRIPRKTKGKS. The disordered stretch occupies residues 1-149; that stretch reads MKRIPRKTKG…DNEGGSNQKP (149 aa). 2 stretches are compositionally biased toward basic and acidic residues: residues 18 to 35 and 75 to 117; these read DSTE…DKQN and NNDE…DKSK. Residues 118–149 show a composition bias toward polar residues; the sequence is AQVTYSDTGINNANELSRSGNVDNEGGSNQKP. The C2H2-type zinc-finger motif lies at 181–203; the sequence is YQCHVCSAVLFSPLDLDAHVASH.

Belongs to the turreted BTV-fold inner capsid family. In terms of assembly, homodecamer; each decamer is made up of two conformers of VP2, called VP2A and VP2B. 12 homodecamers assemble to form an icosahedral capsid. Interacts with protein mu-NS; in viral inclusions. The cofactor is Mg(2+). Requires Mn(2+) as cofactor.

It localises to the virion. It carries out the reaction ATP + H2O = ADP + phosphate + H(+). Functionally, inner capsid protein that self-assembles to form an icosahedral capsid with a T=2 symmetry, which consists of 120 copies of VP2, with channels at each of its five-fold vertices. This capsid constitutes the innermost concentric layer of the viral mature particle. Displays NTPase, RNA 5'-triphosphatase (RTPase) and RNA helicase activities and probably participates in transcription of the viral genome. Helicase activity might be involved in unwinding or reannealing dsRNA during RNA synthesis. RTPase enzymatic activity represents the first step in RNA capping, which yields a 5'-diphosphorylated plus-strand RNA. The polypeptide is Inner capsid protein lambda-1 (L3) (Reovirus type 1 (strain Lang) (T1L)).